Consider the following 295-residue polypeptide: Reticulon-like protein 1 (295 aa).

Residues 1–50 (MSASAQHSQAQQQQQQKSCNCDLLLWRNPVQTGKYFGGSLLALLILKKVN) are Cytoplasmic-facing. The 201-residue stretch at 20-220 (NCDLLLWRNP…ISNLVKSKTA (201 aa)) folds into the Reticulon domain. Residues 51–73 (LITFFLKVAYTILFTTGSIEFVS) traverse the membrane as a helical segment. At 74–142 (KLFLGQGLIT…ALFLLHKFFS (69 aa)) the chain is on the lumenal side. Residues 143-163 (WFSIWTIVFVADIFTFTLPVI) traverse the membrane as a helical segment. Topologically, residues 164–295 (YHSYKHEIDA…LQNELEKNNA (132 aa)) are cytoplasmic. Residues threonine 186 and threonine 219 each carry the phosphothreonine modification. Residues 219-235 (TAPVSSTAGPQTASTSK) show a composition bias toward polar residues. Residues 219-295 (TAPVSSTAGP…LQNELEKNNA (77 aa)) are disordered. Serine 232 carries the post-translational modification Phosphoserine. Residues 265–295 (STTQEFNVDELSNELKKSTKNLQNELEKNNA) are a coiled coil.

Interacts with POM33.

Its subcellular location is the endoplasmic reticulum membrane. This Saccharomyces cerevisiae (strain ATCC 204508 / S288c) (Baker's yeast) protein is Reticulon-like protein 1 (RTN1).